A 743-amino-acid chain; its full sequence is Serine/threonine-protein kinase GD17699 (743 aa).

A disordered region spans residues 54–78; that stretch reads NVQEDNSYNRDCDSPVSSSSEPEKE. Doublecortin domains lie at 154–240 and 309–392; these read LRIK…VEYN and RIVT…AEDF. One can recognise a Protein kinase domain in the interval 473–731; the sequence is YTLGRIIGDG…SEDILDHPWT (259 aa). ATP is bound by residues 479 to 487 and lysine 502; that span reads IGDGNFAIV. Aspartate 594 acts as the Proton acceptor in catalysis.

The protein belongs to the protein kinase superfamily. CAMK Ser/Thr protein kinase family. CaMK subfamily.

It catalyses the reaction L-seryl-[protein] + ATP = O-phospho-L-seryl-[protein] + ADP + H(+). It carries out the reaction L-threonyl-[protein] + ATP = O-phospho-L-threonyl-[protein] + ADP + H(+). This Drosophila simulans (Fruit fly) protein is Serine/threonine-protein kinase GD17699.